Here is a 159-residue protein sequence, read N- to C-terminus: Ribosomal RNA large subunit methyltransferase H (159 aa).

S-adenosyl-L-methionine is bound by residues Leu76, Gly108, and 127-132; that span reads FSKMTF.

The protein belongs to the RNA methyltransferase RlmH family. In terms of assembly, homodimer.

The protein localises to the cytoplasm. It carries out the reaction pseudouridine(1915) in 23S rRNA + S-adenosyl-L-methionine = N(3)-methylpseudouridine(1915) in 23S rRNA + S-adenosyl-L-homocysteine + H(+). In terms of biological role, specifically methylates the pseudouridine at position 1915 (m3Psi1915) in 23S rRNA. The polypeptide is Ribosomal RNA large subunit methyltransferase H (Lachnoclostridium phytofermentans (strain ATCC 700394 / DSM 18823 / ISDg) (Clostridium phytofermentans)).